The following is a 228-amino-acid chain: Thrombin-like enzyme gyroxin analog (228 aa).

The region spanning 1 to 222 is the Peptidase S1 domain; that stretch reads VIGGDECNIN…YLDWIQSVIA (222 aa). 6 cysteine pairs are disulfide-bonded: C7–C138, C28–C44, C78–C227, C117–C183, C149–C162, and C173–C198. H43 functions as the Charge relay system in the catalytic mechanism. N45 and N81 each carry an N-linked (GlcNAc...) asparagine glycan. D88 serves as the catalytic Charge relay system. N145 is a glycosylation site (N-linked (GlcNAc...) asparagine). S177 serves as the catalytic Charge relay system. N224 carries N-linked (GlcNAc...) asparagine glycosylation.

The protein belongs to the peptidase S1 family. Snake venom subfamily. As to quaternary structure, monomer. As to expression, expressed by the venom gland.

It is found in the secreted. The enzyme catalyses Selective cleavage of Arg-|-Xaa bond in fibrinogen, to form fibrin, and release fibrinopeptide A. The specificity of further degradation of fibrinogen varies with species origin of the enzyme.. With respect to regulation, inhibited competitively by amidines and guanidines, and irreversibly inhibited by diisopropylfluorophosphate. Its function is as follows. Thrombin-like snake venom serine protease, that cleaves alpha-chain of fibrinogen (FGA) releases only fibrinopeptide A. Shows coagulant, esterase and amidase activities. Induces the barrel rotation syndrome in mice, which is manifested by gyroxin-like, rapid rolling motions. May also reversibly increase the permeability of the blood brain barrier (BBB) in mice. In Lachesis muta muta (Bushmaster), this protein is Thrombin-like enzyme gyroxin analog.